A 332-amino-acid polypeptide reads, in one-letter code: Decaprenyl-phosphate phosphoribosyltransferase (332 aa).

The segment covering 1–12 (MSEHAAEHHRDT) has biased composition (basic and acidic residues). The segment at 1 to 36 (MSEHAAEHHRDTQNFLTSEPHTTAIEDNKKRQPPKN) is disordered. Helical transmembrane passes span 50–70 (WVKNVLVLAAPLAAGADAIFN) and 74–94 (IIDVAIAFVVFCFGASAIYLV). 5-phospho-alpha-D-ribose 1-diphosphate-binding residues include Lys52 and Tyr92. Positions 95 and 99 each coordinate Mg(2+). Lys109 is a binding site for 5-phospho-alpha-D-ribose 1-diphosphate. The next 2 helical transmembrane spans lie at 114–134 (IAAGVLPVGMAYGMAVALIAL) and 146–166 (VALACVIGVYIALQLGYCFGW). 5-phospho-alpha-D-ribose 1-diphosphate is bound by residues Lys167 and Arg184. 2 helical membrane-spanning segments follow: residues 169–189 (MPVIDIALVSSGFMLRAMAGG) and 190–210 (VAAGIELSQWFLLVAAFGSLF). Trans,octa-cis-decaprenyl phosphate is bound at residue Lys215. 3 consecutive transmembrane segments (helical) span residues 244–264 (FVWTMAATAVVMSYALWGFDL), 273–293 (PWYQISMVPFTIAILRYAAGV), and 310–330 (VLQVLALAWVFCIVMAVYIMP).

Belongs to the UbiA prenyltransferase family. DPPR synthase subfamily. The cofactor is Mg(2+).

The protein resides in the cell inner membrane. It carries out the reaction trans,octa-cis-decaprenyl phosphate + 5-phospho-alpha-D-ribose 1-diphosphate + H(+) = trans,octa-cis-decaprenylphospho-beta-D-ribofuranose 5-phosphate + diphosphate. Its pathway is cell wall biogenesis; cell wall polysaccharide biosynthesis. In terms of biological role, involved in the biosynthesis of decaprenylphosphoryl arabinose (DPA) a precursor for arabinan synthesis in mycobacterial cell wall biosynthesis. Catalyzes the transfer of a 5-phosphoribosyl residue from phosphoribose diphosphate (PRPP) to decaprenyl phosphate (DP) to form decaprenylphosphoryl-5-phosphoribose (DPPR). This chain is Decaprenyl-phosphate phosphoribosyltransferase, found in Corynebacterium glutamicum (strain ATCC 13032 / DSM 20300 / JCM 1318 / BCRC 11384 / CCUG 27702 / LMG 3730 / NBRC 12168 / NCIMB 10025 / NRRL B-2784 / 534).